The chain runs to 252 residues: Adenosylcobinamide-GDP ribazoletransferase (252 aa).

Helical transmembrane passes span F33–L53, T105–L125, L132–L152, F184–F204, and M215–A235.

It belongs to the CobS family. The cofactor is Mg(2+).

Its subcellular location is the cell membrane. The enzyme catalyses alpha-ribazole + adenosylcob(III)inamide-GDP = adenosylcob(III)alamin + GMP + H(+). The catalysed reaction is alpha-ribazole 5'-phosphate + adenosylcob(III)inamide-GDP = adenosylcob(III)alamin 5'-phosphate + GMP + H(+). Its pathway is cofactor biosynthesis; adenosylcobalamin biosynthesis; adenosylcobalamin from cob(II)yrinate a,c-diamide: step 7/7. In terms of biological role, joins adenosylcobinamide-GDP and alpha-ribazole to generate adenosylcobalamin (Ado-cobalamin). Also synthesizes adenosylcobalamin 5'-phosphate from adenosylcobinamide-GDP and alpha-ribazole 5'-phosphate. The sequence is that of Adenosylcobinamide-GDP ribazoletransferase from Sulfolobus acidocaldarius (strain ATCC 33909 / DSM 639 / JCM 8929 / NBRC 15157 / NCIMB 11770).